Consider the following 65-residue polypeptide: Weak neurotoxin 7 (65 aa).

Disulfide bonds link Cys3-Cys24, Cys6-Cys11, Cys17-Cys42, Cys46-Cys57, and Cys58-Cys63.

The protein belongs to the three-finger toxin family. Ancestral subfamily. Orphan group II sub-subfamily. Expressed by the venom gland.

The protein localises to the secreted. Binds with low affinity to muscular (alpha-1-beta-1-delta-epsilon/CHRNA1-CHRNB1-CHRND-CHRNE) and very low affinity to neuronal (alpha-7/CHRNA7) nicotinic acetylcholine receptor (nAChR). The polypeptide is Weak neurotoxin 7 (Naja naja (Indian cobra)).